A 395-amino-acid chain; its full sequence is Multidrug resistance protein MdtL (395 aa).

The next 12 helical transmembrane spans lie at 4 to 24 (FLLCSFALVLLYPAGIDMYLV), 42 to 62 (IAFSVYLAGMATAMLFAGKIA), 69 to 89 (PVAIVGALVFMTASLLCSRAS), 93 to 113 (LFLSGRFLQGVGAGGCYVVAF), 131 to 151 (LLNGITCIVPVLAPVMGHLIM), 158 to 178 (SLFYTMSAMGIIVGLLSLFIL), 217 to 237 (VSVILTFVNASPVLLMEVMGF), 247 to 267 (ALTAGVSMVVSFSTPFALGLF), 271 to 291 (TLMLVSQGLFLTAGVTLSLAH), 295 to 315 (VTLFGLTLICAGFSVGFGVAM), 328 to 350 (VASSTLGIAQVCGSSLWIWLAAI), and 355 to 377 (AMNMLIGILIGCSIVSILLIFSV).

The protein belongs to the major facilitator superfamily. DHA1 family. MdtL (TC 2.A.1.2.22) subfamily.

It is found in the cell inner membrane. The sequence is that of Multidrug resistance protein MdtL from Salmonella schwarzengrund (strain CVM19633).